The sequence spans 349 residues: Cytoplasmic tRNA 2-thiolation protein 2 (349 aa).

Belongs to the CTU2/NCS2 family.

It is found in the cytoplasm. It functions in the pathway tRNA modification; 5-methoxycarbonylmethyl-2-thiouridine-tRNA biosynthesis. Functionally, plays a central role in 2-thiolation of mcm(5)S(2)U at tRNA wobble positions of tRNA(Lys), tRNA(Glu) and tRNA(Gln). May act by forming a heterodimer with tut-1/ctu-1 that ligates sulfur from thiocarboxylated urm-1 onto the uridine of tRNAs at wobble position. The protein is Cytoplasmic tRNA 2-thiolation protein 2 of Caenorhabditis elegans.